The following is a 133-amino-acid chain: Large ribosomal subunit protein uL15 (133 aa).

The tract at residues 1–58 is disordered; it reads MALQNLTPAPGSTHATKRLGRGQGSGNGKTAGKGNKGQRARKGYNEKRGFEGGQQPLQ. Gly residues predominate over residues 21–35; it reads RGQGSGNGKTAGKGN.

The protein belongs to the universal ribosomal protein uL15 family. Part of the 50S ribosomal subunit.

Binds to the 23S rRNA. The protein is Large ribosomal subunit protein uL15 of Campylobacter curvus (strain 525.92).